The sequence spans 98 residues: Defensin-like protein 68 (98 aa).

A signal peptide spans 1-19 (MGSSKLLVALTLVVMITIS). 4 disulfide bridges follow: cysteine 38/cysteine 88, cysteine 42/cysteine 65, cysteine 51/cysteine 86, and cysteine 55/cysteine 87.

Belongs to the DEFL family.

The protein resides in the secreted. The chain is Defensin-like protein 68 from Arabidopsis thaliana (Mouse-ear cress).